The sequence spans 610 residues: Propanediol dehydratase-reactivating factor large subunit (610 aa).

11 to 13 is an ATP binding site; sequence NSS. Mg(2+) contacts are provided by threonine 105, aspartate 166, and aspartate 183. Residues 459–462, 557–558, and arginine 591 each bind ATP; these read EEIK and GS.

It belongs to the DdrA/PduG family. As to quaternary structure, forms a heterotetramer PduG(2)/PduH(2). Mg(2+) is required as a cofactor.

The protein resides in the bacterial microcompartment. It carries out the reaction ATP + H2O = ADP + phosphate + H(+). Its pathway is polyol metabolism; 1,2-propanediol degradation. Large subunit of the propanediol dehydratase-reactivating factor (DDR), which reactivates suicidally inhibited adenosylcobalamin-dependent propanediol dehydratase (diol dehydratase, DDH) found in the bacterial microcompartment (BMC) dedicated to 1,2-propanediol (1,2-PD) degradation. Reactivates inactivated DDH in the presence of ATP, Mg(2+) and free adenosylcobalamin (AdoCbl), by mediating the exchange of the tightly bound damaged cofactor AdoCbl for a free intact one. This subunit contains the adenosine nucleotide binding site. Its function is as follows. The 1,2-PD-specific bacterial microcompartment (BMC) concentrates low levels of 1,2-PD catabolic enzymes, concentrates volatile reaction intermediates thus enhancing pathway flux and keeps the level of toxic, mutagenic propionaldehyde low. The sequence is that of Propanediol dehydratase-reactivating factor large subunit from Salmonella typhimurium (strain LT2 / SGSC1412 / ATCC 700720).